A 175-amino-acid polypeptide reads, in one-letter code: Large ribosomal subunit protein uL10 (175 aa).

Belongs to the universal ribosomal protein uL10 family. As to quaternary structure, part of the ribosomal stalk of the 50S ribosomal subunit. The N-terminus interacts with L11 and the large rRNA to form the base of the stalk. The C-terminus forms an elongated spine to which L12 dimers bind in a sequential fashion forming a multimeric L10(L12)X complex.

Forms part of the ribosomal stalk, playing a central role in the interaction of the ribosome with GTP-bound translation factors. The protein is Large ribosomal subunit protein uL10 of Cyanothece sp. (strain PCC 7425 / ATCC 29141).